The following is a 472-amino-acid chain: Tubulin gamma chain (472 aa).

Position 142–148 (142–148 (AGGTGSG)) interacts with GTP.

It belongs to the tubulin family.

The protein localises to the cytoplasm. It localises to the cytoskeleton. It is found in the microtubule organizing center. Its function is as follows. Tubulin is the major constituent of microtubules. The gamma chain is found at microtubule organizing centers (MTOC) such as the spindle poles, suggesting that it is involved in the minus-end nucleation of microtubule assembly. The sequence is that of Tubulin gamma chain (TUBG) from Anemia phyllitidis (Fern).